A 471-amino-acid polypeptide reads, in one-letter code: MGSFPCPQKIEQVLLSGQGLNELSFASRPACASMLVERVPHHGVVYGLGQETAVAQPNLPEGFDFTDPDVYAERIPYQEFAELRKTAPIWWNPQPPEIGGFHDDGYWVVSKLEDVKEVSRRSDVFSTHENTAIVRFADDIPRENIEMQRFILINKDAPEHTKLRKLVSRGFTPRAINSLREELTERAEKIVKEAAESGAGDFVTQVACELPLQAIAELLGVPQEDRLKVFDWSNQMTGYDDPELDIDPQAASMEILGYAYQMADERKKCPADDIVTTLIEADIDGNELSPEEFGFFVILLAVAGNETTRNAITHGMMAFLDHPDQWELYKKERPKTTADEIVRWATPVNSFQRTALEDTELGGVQIKKGQRVVMLYGSANFDEDAFENPEKFDIMRENNPHVGFGGTGAHFCLGANLARLEIDLIFNAIADHLPDISKLGDPRRLRSGWLNGIKEFQVDYKTASGGCPVRH.

Glycine 238 is a binding site for substrate. Cysteine 412 is a binding site for heme.

This sequence belongs to the cytochrome P450 family. Heme is required as a cofactor.

The catalysed reaction is cholest-4-en-3-one + 6 reduced [2Fe-2S]-[ferredoxin] + 3 O2 + 5 H(+) = (25S)-3-oxocholest-4-en-26-oate + 6 oxidized [2Fe-2S]-[ferredoxin] + 4 H2O. In terms of biological role, involved in the utilization of cholesterol as the sole carbon and energy source by degrading the side chain. Primarily catalyzes the sequential oxidation of the terminal methyl of cholest-4-en-3-one into (25S)-26-hydroxycholest-4-en-3-one (alcohol), (25S)-26-oxocholest-4-en-3-one (aldehyde), to finally yield the carboxylic acid (25S)-3-oxocholest-4-en-26-oate. Also able to sequentially oxidize cholesterol itself, not only cholest-4-en-3-one. The chain is Steroid C26-monooxygenase (cyp125) from Rhodococcus jostii (strain RHA1).